The primary structure comprises 431 residues: Glutamyl-tRNA(Gln) amidotransferase subunit A (431 aa).

Active-site charge relay system residues include K37 and S112. S136 (acyl-ester intermediate) is an active-site residue.

This sequence belongs to the amidase family. GatA subfamily. Heterotrimer of A, B and C subunits.

It carries out the reaction L-glutamyl-tRNA(Gln) + L-glutamine + ATP + H2O = L-glutaminyl-tRNA(Gln) + L-glutamate + ADP + phosphate + H(+). In terms of biological role, allows the formation of correctly charged Gln-tRNA(Gln) through the transamidation of misacylated Glu-tRNA(Gln) in organisms which lack glutaminyl-tRNA synthetase. The reaction takes place in the presence of glutamine and ATP through an activated gamma-phospho-Glu-tRNA(Gln). The sequence is that of Glutamyl-tRNA(Gln) amidotransferase subunit A from Methanospirillum hungatei JF-1 (strain ATCC 27890 / DSM 864 / NBRC 100397 / JF-1).